The primary structure comprises 453 residues: Bis(5'-adenosyl)-triphosphatase ENPP4 (453 aa).

The signal sequence occupies residues 1-18; that stretch reads MKLLLMLLFSGLMTGCRG. Residues 19–407 are Extracellular-facing; that stretch reads NSSSASPPKL…DQWCINLPEA (389 aa). Positions 34 and 70 each coordinate Zn(2+). Thr-70 (AMP-threonine intermediate) is an active-site residue. Residues Asn-91 and Tyr-154 each coordinate substrate. Residue Asn-166 is glycosylated (N-linked (GlcNAc...) asparagine). Zn(2+) contacts are provided by Asp-189, His-193, Asp-237, and His-238. Residue Asp-189 participates in substrate binding. Cys-254 and Cys-287 are joined by a disulfide. N-linked (GlcNAc...) asparagine glycosylation is present at Asn-276. Zn(2+) is bound at residue His-336. The cysteines at positions 394 and 401 are disulfide-linked. Residues 408–428 traverse the membrane as a helical segment; that stretch reads IGIVIGALLVLTTLTCLIIIM. The Cytoplasmic portion of the chain corresponds to 429–453; that stretch reads QNRVSGPRPFSRLQLQEDDDDPLIG.

This sequence belongs to the nucleotide pyrophosphatase/phosphodiesterase family. Zn(2+) serves as cofactor.

The protein localises to the cell membrane. The catalysed reaction is P(1),P(3)-bis(5'-adenosyl) triphosphate + H2O = AMP + ADP + 2 H(+). Hydrolyzes extracellular Ap3A into AMP and ADP, and Ap4A into AMP and ATP. Ap3A and Ap4A are diadenosine polyphosphates thought to induce proliferation of vascular smooth muscle cells. Acts as a procoagulant, mediating platelet aggregation at the site of nascent thrombus via release of ADP from Ap3A and activation of ADP receptors. The protein is Bis(5'-adenosyl)-triphosphatase ENPP4 (ENPP4) of Bos taurus (Bovine).